The primary structure comprises 118 residues: Small ribosomal subunit protein uS11 (118 aa).

It belongs to the universal ribosomal protein uS11 family. Part of the 30S ribosomal subunit. Interacts with proteins S7 and S18. Binds to IF-3.

Functionally, located on the platform of the 30S subunit, it bridges several disparate RNA helices of the 16S rRNA. Forms part of the Shine-Dalgarno cleft in the 70S ribosome. In Carsonella ruddii (strain PV), this protein is Small ribosomal subunit protein uS11.